The chain runs to 280 residues: Tryptophan synthase alpha chain (280 aa).

Active-site proton acceptor residues include Glu-49 and Asp-60.

The protein belongs to the TrpA family. Tetramer of two alpha and two beta chains.

The enzyme catalyses (1S,2R)-1-C-(indol-3-yl)glycerol 3-phosphate + L-serine = D-glyceraldehyde 3-phosphate + L-tryptophan + H2O. The protein operates within amino-acid biosynthesis; L-tryptophan biosynthesis; L-tryptophan from chorismate: step 5/5. In terms of biological role, the alpha subunit is responsible for the aldol cleavage of indoleglycerol phosphate to indole and glyceraldehyde 3-phosphate. This is Tryptophan synthase alpha chain from Corynebacterium efficiens (strain DSM 44549 / YS-314 / AJ 12310 / JCM 11189 / NBRC 100395).